A 244-amino-acid chain; its full sequence is tRNA (guanine-N(1)-)-methyltransferase (244 aa).

S-adenosyl-L-methionine is bound by residues glycine 120 and 140-145 (IGDYIL).

The protein belongs to the RNA methyltransferase TrmD family. Homodimer.

It localises to the cytoplasm. It carries out the reaction guanosine(37) in tRNA + S-adenosyl-L-methionine = N(1)-methylguanosine(37) in tRNA + S-adenosyl-L-homocysteine + H(+). Functionally, specifically methylates guanosine-37 in various tRNAs. This Brucella canis (strain ATCC 23365 / NCTC 10854 / RM-666) protein is tRNA (guanine-N(1)-)-methyltransferase.